A 158-amino-acid chain; its full sequence is MITVIYPGTFDPITNGHLDIIQRTARLFPNVLVAVASNPNKKPLFDLATRVELVKQAVAHLPNVTVVGFLDLLADVVKERNITAIIRGVRSASDFDYELQLAHLNRLLTNGVESLFFPPSERWSYVSSTMIREIHLHHGDVSQLVPEVVFHALQNLKK.

Thr-9 lines the substrate pocket. ATP contacts are provided by residues 9-10 (TF) and His-17. Residues Lys-41, Leu-73, and Arg-87 each contribute to the substrate site. Residues 88-90 (GVR), Glu-98, and 123-129 (WSYVSST) contribute to the ATP site.

The protein belongs to the bacterial CoaD family. As to quaternary structure, homohexamer. Mg(2+) serves as cofactor.

Its subcellular location is the cytoplasm. It carries out the reaction (R)-4'-phosphopantetheine + ATP + H(+) = 3'-dephospho-CoA + diphosphate. It functions in the pathway cofactor biosynthesis; coenzyme A biosynthesis; CoA from (R)-pantothenate: step 4/5. Its function is as follows. Reversibly transfers an adenylyl group from ATP to 4'-phosphopantetheine, yielding dephospho-CoA (dPCoA) and pyrophosphate. This chain is Phosphopantetheine adenylyltransferase, found in Pasteurella multocida (strain Pm70).